A 337-amino-acid chain; its full sequence is Phosphate acyltransferase (337 aa).

Belongs to the PlsX family. As to quaternary structure, homodimer. Probably interacts with PlsY.

Its subcellular location is the cytoplasm. The catalysed reaction is a fatty acyl-[ACP] + phosphate = an acyl phosphate + holo-[ACP]. It functions in the pathway lipid metabolism; phospholipid metabolism. Catalyzes the reversible formation of acyl-phosphate (acyl-PO(4)) from acyl-[acyl-carrier-protein] (acyl-ACP). This enzyme utilizes acyl-ACP as fatty acyl donor, but not acyl-CoA. In Polynucleobacter asymbioticus (strain DSM 18221 / CIP 109841 / QLW-P1DMWA-1) (Polynucleobacter necessarius subsp. asymbioticus), this protein is Phosphate acyltransferase.